Consider the following 418-residue polypeptide: Glutamyl-tRNA reductase (418 aa).

Substrate is bound by residues 49–52 (TCNR), Ser-109, 114–116 (EPQ), and Gln-120. The active-site Nucleophile is the Cys-50. NADP(+) is bound at residue 189-194 (GAGETI).

The protein belongs to the glutamyl-tRNA reductase family. Homodimer.

It carries out the reaction (S)-4-amino-5-oxopentanoate + tRNA(Glu) + NADP(+) = L-glutamyl-tRNA(Glu) + NADPH + H(+). It participates in porphyrin-containing compound metabolism; protoporphyrin-IX biosynthesis; 5-aminolevulinate from L-glutamyl-tRNA(Glu): step 1/2. In terms of biological role, catalyzes the NADPH-dependent reduction of glutamyl-tRNA(Glu) to glutamate 1-semialdehyde (GSA). This Enterobacter sp. (strain 638) protein is Glutamyl-tRNA reductase.